The chain runs to 119 residues: Large ribosomal subunit protein uL22c (119 aa).

Belongs to the universal ribosomal protein uL22 family. As to quaternary structure, part of the 50S ribosomal subunit.

It localises to the plastid. The protein localises to the chloroplast. Functionally, this protein binds specifically to 23S rRNA. Its function is as follows. The globular domain of the protein is located near the polypeptide exit tunnel on the outside of the subunit, while an extended beta-hairpin is found that lines the wall of the exit tunnel in the center of the 70S ribosome. The protein is Large ribosomal subunit protein uL22c (rpl22) of Mesostigma viride (Green alga).